Consider the following 382-residue polypeptide: L-arabinitol 4-dehydrogenase (382 aa).

Zn(2+)-binding residues include Cys-55, His-80, Glu-81, Cys-110, Cys-113, Cys-116, Cys-124, and Glu-165. NAD(+)-binding positions include 192 to 193 (PI), Asp-213, Arg-218, Ile-293, and 317 to 319 (QYR).

The protein belongs to the zinc-containing alcohol dehydrogenase family. Homotetramer. It depends on Zn(2+) as a cofactor.

The catalysed reaction is L-arabinitol + NAD(+) = L-xylulose + NADH + H(+). It participates in carbohydrate degradation; L-arabinose degradation via L-arabinitol; D-xylulose 5-phosphate from L-arabinose (fungal route): step 2/5. Functionally, catalyzes the NAD-dependent oxidation of L-arabinitol to L-xylulose in the fungal L-arabinose catabolic pathway. L-arabinose catabolism is important for using plant material as a carbon source. Also active on ribitol and xylitol. Not active with NADP as cosubstrate. In Aspergillus oryzae (Yellow koji mold), this protein is L-arabinitol 4-dehydrogenase (ladA).